The sequence spans 163 residues: Nucleotide-binding protein all4662 (163 aa).

The protein belongs to the YajQ family.

In terms of biological role, nucleotide-binding protein. The sequence is that of Nucleotide-binding protein all4662 from Nostoc sp. (strain PCC 7120 / SAG 25.82 / UTEX 2576).